Here is a 279-residue protein sequence, read N- to C-terminus: Pantothenate synthetase (279 aa).

26–33 (MGNLHDGH) lines the ATP pocket. His-33 functions as the Proton donor in the catalytic mechanism. Gln-57 is a binding site for (R)-pantoate. Gln-57 contacts beta-alanine. Residue 144-147 (GKKD) participates in ATP binding. Gln-150 contacts (R)-pantoate. 181–184 (LSSR) provides a ligand contact to ATP.

This sequence belongs to the pantothenate synthetase family. In terms of assembly, homodimer.

The protein resides in the cytoplasm. The catalysed reaction is (R)-pantoate + beta-alanine + ATP = (R)-pantothenate + AMP + diphosphate + H(+). Its pathway is cofactor biosynthesis; (R)-pantothenate biosynthesis; (R)-pantothenate from (R)-pantoate and beta-alanine: step 1/1. Its function is as follows. Catalyzes the condensation of pantoate with beta-alanine in an ATP-dependent reaction via a pantoyl-adenylate intermediate. This Janthinobacterium sp. (strain Marseille) (Minibacterium massiliensis) protein is Pantothenate synthetase.